A 151-amino-acid chain; its full sequence is UPF0208 membrane protein YfbV (151 aa).

The Cytoplasmic segment spans residues M1–R45. A helical transmembrane segment spans residues Y46–L65. The Periplasmic segment spans residues G66–Q68. A helical membrane pass occupies residues L69–G91. Residues K92 to L151 lie on the Cytoplasmic side of the membrane.

The protein belongs to the UPF0208 family.

Its subcellular location is the cell inner membrane. This is UPF0208 membrane protein YfbV (yfbV) from Salmonella typhi.